A 787-amino-acid polypeptide reads, in one-letter code: Protein translocase subunit SecA (787 aa).

ATP contacts are provided by residues Gln85, 103–107, and Asp492; that span reads GEGKT.

Belongs to the SecA family. Monomer and homodimer. Part of the essential Sec protein translocation apparatus which comprises SecA, SecYEG and auxiliary proteins SecDF. Other proteins may also be involved.

Its subcellular location is the cell membrane. It localises to the cytoplasm. It carries out the reaction ATP + H2O + cellular proteinSide 1 = ADP + phosphate + cellular proteinSide 2.. Part of the Sec protein translocase complex. Interacts with the SecYEG preprotein conducting channel. Has a central role in coupling the hydrolysis of ATP to the transfer of proteins into and across the cell membrane, serving as an ATP-driven molecular motor driving the stepwise translocation of polypeptide chains across the membrane. This is Protein translocase subunit SecA from Limosilactobacillus reuteri (strain DSM 20016) (Lactobacillus reuteri).